A 287-amino-acid polypeptide reads, in one-letter code: ATP synthase gamma chain (287 aa).

Belongs to the ATPase gamma chain family. As to quaternary structure, F-type ATPases have 2 components, CF(1) - the catalytic core - and CF(0) - the membrane proton channel. CF(1) has five subunits: alpha(3), beta(3), gamma(1), delta(1), epsilon(1). CF(0) has three main subunits: a, b and c.

It is found in the cell membrane. Produces ATP from ADP in the presence of a proton gradient across the membrane. The gamma chain is believed to be important in regulating ATPase activity and the flow of protons through the CF(0) complex. This Brevibacillus brevis (strain 47 / JCM 6285 / NBRC 100599) protein is ATP synthase gamma chain.